The primary structure comprises 151 residues: Small ribosomal subunit protein uS13 (151 aa).

This sequence belongs to the universal ribosomal protein uS13 family. In terms of assembly, part of the 30S ribosomal subunit. Forms a loose heterodimer with protein S19. Forms two bridges to the 50S subunit in the 70S ribosome.

Located at the top of the head of the 30S subunit, it contacts several helices of the 16S rRNA. In the 70S ribosome it contacts the 23S rRNA (bridge B1a) and protein L5 of the 50S subunit (bridge B1b), connecting the 2 subunits; these bridges are implicated in subunit movement. This chain is Small ribosomal subunit protein uS13, found in Staphylothermus marinus (strain ATCC 43588 / DSM 3639 / JCM 9404 / F1).